The primary structure comprises 326 residues: Diaminopimelate epimerase (326 aa).

N13 and N72 together coordinate substrate. C81 serves as the catalytic Proton donor. Residues 82–83, N169, N205, and 223–224 contribute to the substrate site; these read GN and ER. Residue C232 is the Proton acceptor of the active site. 233–234 serves as a coordination point for substrate; it reads GT.

The protein belongs to the diaminopimelate epimerase family. In terms of assembly, homodimer.

The protein localises to the cytoplasm. The enzyme catalyses (2S,6S)-2,6-diaminopimelate = meso-2,6-diaminopimelate. It participates in amino-acid biosynthesis; L-lysine biosynthesis via DAP pathway; DL-2,6-diaminopimelate from LL-2,6-diaminopimelate: step 1/1. Catalyzes the stereoinversion of LL-2,6-diaminopimelate (L,L-DAP) to meso-diaminopimelate (meso-DAP), a precursor of L-lysine and an essential component of the bacterial peptidoglycan. The chain is Diaminopimelate epimerase from Enterococcus faecalis (strain ATCC 700802 / V583).